Consider the following 514-residue polypeptide: 3-octaprenyl-4-hydroxybenzoate carboxy-lyase (514 aa).

Asparagine 177 lines the Mn(2+) pocket. Prenylated FMN-binding positions include 180 to 182 (IYR), 194 to 196 (RWL), and 199 to 200 (RG). Glutamate 243 lines the Mn(2+) pocket. Aspartate 314 (proton donor) is an active-site residue.

It belongs to the UbiD family. In terms of assembly, homohexamer. Requires prenylated FMN as cofactor. The cofactor is Mn(2+).

It is found in the cell membrane. It carries out the reaction a 4-hydroxy-3-(all-trans-polyprenyl)benzoate + H(+) = a 2-(all-trans-polyprenyl)phenol + CO2. Its pathway is cofactor biosynthesis; ubiquinone biosynthesis. Its function is as follows. Catalyzes the decarboxylation of 3-octaprenyl-4-hydroxy benzoate to 2-octaprenylphenol, an intermediate step in ubiquinone biosynthesis. The chain is 3-octaprenyl-4-hydroxybenzoate carboxy-lyase from Bordetella bronchiseptica (strain ATCC BAA-588 / NCTC 13252 / RB50) (Alcaligenes bronchisepticus).